We begin with the raw amino-acid sequence, 471 residues long: MKSDVETLNPTRVKFTVEVGYDELKPSLDKAYKTIAGQVQVPGFRKGKVPPRVIDQRFGRAAVLEEAVNDALPKFYQQAVEASDFLPLGQPTVDVSQAPDPKDGGDLKFSVEVDVRPVLELPDLESIAVTVDDLQVPEEEVETRLTALRERFGTLTGVDRPAADGDFVSIDLRAEIDGEEIETAKGISYRIGQGNMIEGLDEALTGVAAEGSTTFTAPLAGGERKGQDASITVTVQSVKERVLPEADDDFAQLASEFDTLEELRADLLSQVEQSKKFEQGLQARDKVLEKLLETVEVPVPESLVEAEIHAHLERESRLEDAEHRAEIEDSTRQAIRSQLLLDALADREEIGVEQGELIEYLVGQAQQYGMEPQQFVQMVDGAGQVPSMVSEVRRRKALAVAMEKATVTDASGNPVDLEELVGGTEEDDVTEDATEDVTEDAAPAEEGQTVDPTGDDEQAAAEATAEDPAKS.

In terms of domain architecture, PPIase FKBP-type spans glycine 165–proline 244. A disordered region spans residues valine 407–serine 471. Residues aspartate 416–proline 443 are compositionally biased toward acidic residues.

This sequence belongs to the FKBP-type PPIase family. Tig subfamily.

Its subcellular location is the cytoplasm. It catalyses the reaction [protein]-peptidylproline (omega=180) = [protein]-peptidylproline (omega=0). Its function is as follows. Involved in protein export. Acts as a chaperone by maintaining the newly synthesized protein in an open conformation. Functions as a peptidyl-prolyl cis-trans isomerase. This Kineococcus radiotolerans (strain ATCC BAA-149 / DSM 14245 / SRS30216) protein is Trigger factor.